We begin with the raw amino-acid sequence, 251 residues long: tRNA (guanine-N(1)-)-methyltransferase (251 aa).

S-adenosyl-L-methionine contacts are provided by residues glycine 117 and 137 to 142 (IGDYVL).

Belongs to the RNA methyltransferase TrmD family. Homodimer.

The protein resides in the cytoplasm. It catalyses the reaction guanosine(37) in tRNA + S-adenosyl-L-methionine = N(1)-methylguanosine(37) in tRNA + S-adenosyl-L-homocysteine + H(+). In terms of biological role, specifically methylates guanosine-37 in various tRNAs. This chain is tRNA (guanine-N(1)-)-methyltransferase, found in Haemophilus ducreyi (strain 35000HP / ATCC 700724).